We begin with the raw amino-acid sequence, 293 residues long: Protein Pat (293 aa).

Residues 187–287 (LPDIILNPLD…LLLRTRQDRA (101 aa)) enclose the BEN domain.

Interacts with poc1b. In terms of tissue distribution, an mRNA and protein component of germ plasm and primordial germ cells (PGCs) throughout oogenesis and early development, being first localized to the granulo-fibrillar material (GFM) of the mitochondrial cloud in stage I and II oocytes and to the periphery of mature germinal granules both in oocytes and in embryos. Shows some somatic expression including the ectodermal cells of tailbud embryos. In adults, only expressed in ovaries.

It is found in the cytoplasm. The protein resides in the nucleus. Functionally, probably plays a role in germ plasm formation, positioning and maintenance. The polypeptide is Protein Pat (Xenopus laevis (African clawed frog)).